A 577-amino-acid polypeptide reads, in one-letter code: MPKTINVRVTTMDAELEFAIQPNTTGKQLFDQVVKTIGLREVWFFGLQYQDTKGFSTWLKLNKKVTAQDVRKESPLLFKFRAKFYPEDVSEELIQDITQRLFFLQVKEGILNDDIYCPPETAVLLASYAVQSKYGDFNKEVHKSGYLAGDKLLPQRVLEQHKLNKDQWEERIQVWHEEHRGMLREDAVLEYLKIAQDLEMYGVNYFSSKNKKGSELWLGVDALGLNIYEQNDRLTPKIGFPWSEIRNISFNDKKFVIKPIDKKAPDFVFYAPRLRINKRILALCMGNHELYMRRRKPDTIEVQQMKAQAREEKHQKQMERALLENEKKKREMAEKEKEKIEREKEELMERLKQIEEQTKKAQQELEEQTRRALALEQERKRAQSEAEKLAKERQEAEEAKEALLKASRDQKKTQEQLALEMAELTARISQLEMARQKKESEAAEWQQKAQMVQEDLEKTRAELKTAMSTPHGAEPAENDQDEQDENGAEASADLRADAMAKDRSEEERTTEAEKNERVQKHLKALTSELANARDESKKTANDMIHAENMRLGRDKYKTLRQIRQGNTKQRIDEFESM.

An FERM domain is found at 2–295 (PKTINVRVTT…GNHELYMRRR (294 aa)). S74 carries the post-translational modification Phosphoserine. The residue at position 79 (K79) is an N6-acetyllysine. K83 bears the N6-succinyllysine mark. The [IL]-x-C-x-x-[DE] motif signature appears at 115–120 (IYCPPE). Y116 bears the Phosphotyrosine mark. C117 carries the S-nitrosocysteine modification. 2 positions are modified to N6-acetyllysine: K139 and K165. The segment covering 376–414 (EQERKRAQSEAEKLAKERQEAEEAKEALLKASRDQKKTQ) has biased composition (basic and acidic residues). Disordered stretches follow at residues 376-415 (EQER…KTQE) and 434-518 (ARQK…NERV). S407 is modified (phosphoserine). Acidic residues predominate over residues 476–487 (AENDQDEQDENG). Positions 492-518 (ADLRADAMAKDRSEEERTTEAEKNERV) are enriched in basic and acidic residues. S527 carries the phosphoserine modification. Position 558 is a phosphothreonine; by ROCK2 and STK10 (T558).

Binds NHERF1. In resting T-cells, part of a PAG1-NHERF1-MSN complex which is disrupted upon TCR activation. Interacts with PPP1R16B. Interacts with PDZD8. Interacts with SELPLG and SYK; mediates the activation of SYK by SELPLG. Interacts with PDPN (via cytoplasmic domain); activates RHOA and promotes epithelial-mesenchymal transition. Interacts with SPN/CD43 cytoplasmic tail, CD44 and ICAM2. In terms of processing, phosphorylation on Thr-558 is crucial for the formation of microvilli-like structures. Phosphorylation by ROCK2 suppresses the head-to-tail association of the N-terminal and C-terminal halves resulting in an opened conformation which is capable of actin and membrane-binding. Phosphorylation on Thr-558 by STK10 negatively regulates lymphocyte migration and polarization. S-nitrosylation of Cys-117 is induced by interferon-gamma and oxidatively-modified low-densitity lipoprotein (LDL(ox)) implicating the iNOS-S100A8/9 transnitrosylase complex.

The protein localises to the cell membrane. It is found in the cytoplasm. Its subcellular location is the cytoskeleton. It localises to the apical cell membrane. The protein resides in the cell projection. The protein localises to the microvillus membrane. It is found in the microvillus. Its activity is regulated as follows. A head-to-tail association, of the N-terminal and C-terminal halves results in a closed conformation (inactive form) which is incapable of actin or membrane-binding. Its function is as follows. Probably involved in connections of major cytoskeletal structures to the plasma membrane. Plays a role in regulating the proliferation, migration, and adhesion of human lymphoid cells and participates in immunologic synapse formation. The protein is Moesin of Sus scrofa (Pig).